Here is a 151-residue protein sequence, read N- to C-terminus: Arginine repressor (151 aa).

This sequence belongs to the ArgR family.

The protein localises to the cytoplasm. Its pathway is amino-acid biosynthesis; L-arginine biosynthesis [regulation]. Regulates arginine biosynthesis genes. This chain is Arginine repressor, found in Pelotomaculum thermopropionicum (strain DSM 13744 / JCM 10971 / SI).